The following is a 203-amino-acid chain: NAD(P)H-quinone oxidoreductase subunit M, chloroplastic (203 aa).

Residues 1-21 constitute a chloroplast transit peptide; the sequence is MAASSSYMACAKFSMLGWLGG. Low complexity predominate over residues 34–48; sequence SPQEQAEVQESQEVN. Residues 34–61 are disordered; the sequence is SPQEQAEVQESQEVNAQEEEKVKQPVQP.

It belongs to the NDH complex subunit M family. As to quaternary structure, part of the chloroplast NDH complex, composed of a mixture of chloroplast and nucleus encoded subunits. Component of the NDH subcomplex A, at least composed of ndhH, ndhI, ndhJ, ndhK, ndhL, ndhM, ndhN and ndhO.

Its subcellular location is the plastid. The protein localises to the chloroplast thylakoid membrane. It catalyses the reaction a plastoquinone + NADH + (n+1) H(+)(in) = a plastoquinol + NAD(+) + n H(+)(out). The enzyme catalyses a plastoquinone + NADPH + (n+1) H(+)(in) = a plastoquinol + NADP(+) + n H(+)(out). Its function is as follows. NDH shuttles electrons from NAD(P)H:plastoquinone, via FMN and iron-sulfur (Fe-S) centers, to quinones in the photosynthetic chain and possibly in a chloroplast respiratory chain. The immediate electron acceptor for the enzyme in this species is believed to be plastoquinone. Couples the redox reaction to proton translocation, and thus conserves the redox energy in a proton gradient. This chain is NAD(P)H-quinone oxidoreductase subunit M, chloroplastic, found in Populus jackii (Balm of Gilead).